The primary structure comprises 524 residues: Putative ATP-dependent RNA helicase R458 (524 aa).

The Helicase ATP-binding domain occupies 125 to 338; the sequence is VPELIQRKDT…NSYFRKYSPI (214 aa). 138–145 is a binding site for ATP; it reads FKSGTGKT. The DEFD box signature appears at 268 to 271; that stretch reads DEFD. One can recognise a Helicase C-terminal domain in the interval 373-524; that stretch reads IILDLLKQCR…QLPGDLSTLL (152 aa).

Belongs to the DEAD box helicase family. eIF4A subfamily.

It carries out the reaction ATP + H2O = ADP + phosphate + H(+). Its function is as follows. Putative ATP-dependent RNA helicase. This Acanthamoeba polyphaga mimivirus (APMV) protein is Putative ATP-dependent RNA helicase R458.